A 369-amino-acid chain; its full sequence is Putative agmatine deiminase (369 aa).

The Amidino-cysteine intermediate role is filled by cysteine 361.

The protein belongs to the agmatine deiminase family.

The catalysed reaction is agmatine + H2O = N-carbamoylputrescine + NH4(+). This is Putative agmatine deiminase from Streptococcus mutans serotype c (strain ATCC 700610 / UA159).